The primary structure comprises 397 residues: MAKAKFERTKPHVNIGTIGHVDHGKTTLTAAITKVLHDKYPDLNEASAFDQIDNAPEEKARGITINISHVEYQTEKRHYAHVDAPGHADYIKNMITGAAQMDGAILVVAATDGPMPQTREHVLLARQVGVPYILVALNKSDMVDDEELLELVEMEVRELLSSQDFDGDNAPVVRVSALKALEGDAEWGKTVADLMDAVDESIPDPVRETEKPFLMPVEDVFTITGRGTVVTGRVERGVINVNEDVEIVGIKDTTTKTTVTGVEMFRKLLDQGQAGDNVGLLVRGVKREDVERGQVVVKPGTTTPHTEFEGSVYILSKDEGGRHTPFFNNYRPQFYFRTTDVTGVVTLPEGTEMVMPGDNTDISVKLIQPVAMDEGLRFAIREGGRTVGAGRVTKIIK.

One can recognise a tr-type G domain in the interval 10–206; sequence KPHVNIGTIG…AVDESIPDPV (197 aa). Positions 19 to 26 are G1; it reads GHVDHGKT. 19 to 26 is a binding site for GTP; that stretch reads GHVDHGKT. Thr26 contacts Mg(2+). Residues 62–66 form a G2 region; that stretch reads GITIN. Residues 83-86 are G3; that stretch reads DAPG. GTP is bound by residues 83 to 87 and 138 to 141; these read DAPGH and NKSD. A G4 region spans residues 138–141; that stretch reads NKSD. A G5 region spans residues 176-178; sequence SAL.

This sequence belongs to the TRAFAC class translation factor GTPase superfamily. Classic translation factor GTPase family. EF-Tu/EF-1A subfamily. In terms of assembly, monomer.

Its subcellular location is the cytoplasm. The catalysed reaction is GTP + H2O = GDP + phosphate + H(+). Functionally, GTP hydrolase that promotes the GTP-dependent binding of aminoacyl-tRNA to the A-site of ribosomes during protein biosynthesis. The protein is Elongation factor Tu of Mycobacteroides abscessus (strain ATCC 19977 / DSM 44196 / CCUG 20993 / CIP 104536 / JCM 13569 / NCTC 13031 / TMC 1543 / L948) (Mycobacterium abscessus).